The chain runs to 164 residues: Large ribosomal subunit protein uL10 (164 aa).

This sequence belongs to the universal ribosomal protein uL10 family. Part of the ribosomal stalk of the 50S ribosomal subunit. The N-terminus interacts with L11 and the large rRNA to form the base of the stalk. The C-terminus forms an elongated spine to which L12 dimers bind in a sequential fashion forming a multimeric L10(L12)X complex.

Forms part of the ribosomal stalk, playing a central role in the interaction of the ribosome with GTP-bound translation factors. This Helicobacter pylori (strain P12) protein is Large ribosomal subunit protein uL10.